The chain runs to 438 residues: Na(+)/H(+) antiporter NhaA (438 aa).

Helical transmembrane passes span 23–43 (FGGI…NSFL), 62–82 (FFIG…LFFL), 104–124 (SFPV…YFFL), 133–153 (GFGI…MLLG), 162–182 (VFLI…IALF), 185–205 (TNLK…LAVL), 221–241 (VLLW…AVIL), 302–322 (FLAP…NAGV), 337–357 (LGVI…ITFI), 372–392 (WWHI…SMFI), and 410–430 (IAIL…LFAL).

The protein belongs to the NhaA Na(+)/H(+) (TC 2.A.33) antiporter family.

The protein resides in the cell inner membrane. The catalysed reaction is Na(+)(in) + 2 H(+)(out) = Na(+)(out) + 2 H(+)(in). In terms of biological role, na(+)/H(+) antiporter that extrudes sodium in exchange for external protons. The polypeptide is Na(+)/H(+) antiporter NhaA (Helicobacter pylori (strain HPAG1)).